The primary structure comprises 332 residues: MSSTTASPVTVAVTGAAGHIGYAALFRIAAGAMLGHTTPVTLRLLELPDAVRAAEGVVMELEDGAFPLLAGTEIYDDPTRAFDGVDVALLIGARPRTKGMERADLLGANAEIFATSGKALNAGASPDVRVLVVGNPANTNALVASAHAPDIPADRFTALTRLDHNRAVAATARHSGVPVTEISRMTIWGNHSPTQYPDIFHAVVGGRSGADYAADTRWLTDDFIPTVARRGTAIIEARGASSAASAANGAIDHIDDWVHGTPDGDWTSVALPSPGAYGVDEGLVCSFPCRSVGGRWEIVEGLDINPFSRARIDASVAELRTERDAVAALGLL.

15–21 serves as a coordination point for NAD(+); the sequence is GAAGHIG. Residues Arg96 and Arg102 each coordinate substrate. NAD(+) is bound by residues Asn109 and 133–135; that span reads VGN. Substrate-binding residues include Asn135 and Arg166. The active-site Proton acceptor is His191.

It belongs to the LDH/MDH superfamily. MDH type 2 family.

The enzyme catalyses (S)-malate + NAD(+) = oxaloacetate + NADH + H(+). Functionally, catalyzes the reversible oxidation of malate to oxaloacetate. The sequence is that of Malate dehydrogenase from Mycolicibacterium vanbaalenii (strain DSM 7251 / JCM 13017 / BCRC 16820 / KCTC 9966 / NRRL B-24157 / PYR-1) (Mycobacterium vanbaalenii).